The sequence spans 99 residues: MAKKSLIEREKKRQRLVRKYRVMREYLKKKEKQVFSLEEKSKIKSKLQSLPRNSAPTRLHRRCVLTGRSRGIYRDFGLCRHIIREKAHACLLPGITKSS.

The protein belongs to the universal ribosomal protein uS14 family. Part of the 30S ribosomal subunit.

It is found in the plastid. It localises to the chloroplast. Functionally, binds 16S rRNA, required for the assembly of 30S particles. This chain is Small ribosomal subunit protein uS14c, found in Welwitschia mirabilis (Tree tumbo).